Consider the following 200-residue polypeptide: DNA-binding protein HupB (200 aa).

The segment at M1–A90 is bacterial histone-like domain. N6-acetyllysine is present on residues K3, K72, K86, K103, K137, K144, and K156. The segment at A101–K200 is degenerate repeats region. Positions A179–K200 are disordered.

It belongs to the bacterial histone-like protein family. Long actinobacterial subfamily. In terms of assembly, binds to human laminin-2. In terms of processing, may also be methylated and possibly phosphorylated in vivo.

The protein localises to the cytoplasm. The protein resides in the nucleoid. It is found in the secreted. It localises to the cell wall. Its subcellular location is the cell surface. The enzyme catalyses 4 Fe(2+) + O2 + 4 H(+) = 4 Fe(3+) + 2 H2O. A nucleoid-associated protein (NAP) that plays a role in local chromosome architecture and chromosome compactation. Required for biofilm formation, stress survival and possibly in cell wall assembly, probably influences transcription. RNase E and HupB jointly contribute to cellular adaptation to changing growth conditions and survival during antibiotic treatment and in the host. Functionally, binds Fe(3+) but not Fe(2+). Has ferroxidase activity, converts Fe(2+) into Fe(3+) and in the presence of H(2)O(2) prevents the generation of hydroxyl radicals (the Fenton reaction). Protects DNA from damage in the presence of FeSO(4) and H(2)O(2). May function in iron storage. Its function is as follows. May be involved in entry into human Schwann cells. The protein is DNA-binding protein HupB of Mycobacterium leprae (strain TN).